The sequence spans 791 residues: MKFSENWLRSHVPIQASREELAATLTAIGLEVEAVTPLGDALGQVVVARIIAAVRHPEADRLQVCSVDAGQGELLQIVCGAPNARAGLVAPLALVGAQIGELTIKAAKLRGVASNGMLCSAKELGLDSDASGLFELPDDAPVGQALAEYLGLPDASIEIKLTPNRADCFSVRGIAFDVAAACASEVAAFDAAAVAPVSTRTLAVELNAGSEAPRYCGRVIEGIDPAATTPVWMAERLRRSGVRPVSLLVDITQYVMLELGQPMHAFDLDTLHGPVGVRRSRAGEQLALLDGREVTLDDSFLTITDADRPVALAGLMGGLDTRVTNTTRNVFLESAYFDPAAIMGRGRKLGLHTDAGHRFERGVDPALAPQAIEVATRLVLELAGGMPGPVVDAALPHHLPQPASILLRRARIARVLGIQIDDADVARILTALGMHVEAAADGWQVTAPSRRFDIAIEEDLIEELARIHGYDRVPTTLPGGASRIAMPSETQLDELSVRRQLVARELQETINYAFVDAALLERWQLTDGVVPLANPLSAELAVMRPRLLPGLVATLGRNVARQVGRVRLFELGKVFSAAGPGDAPVESQQVAAAVCGDALALQWGEPARKVDFHDLKGDLLALAAASGAVLEFQPSTQPFGHPGRSADIYRDGVCIGWIGQVHPRLAKSLDIDVDVIAFELQLAPLVKRALPRAGELSRYPSMRRDLAFLVPDAVSWAALSASVRTSVGPLLREVQLFDRYVGQGVEPGFKSLAMGLILQDNSRTLTDRDVDAVVADVVAVIEREHRARIRG.

Residues 39 to 147 form the tRNA-binding domain; it reads GDALGQVVVA…DDAPVGQALA (109 aa). Residues 400-475 enclose the B5 domain; that stretch reads PQPASILLRR…RIHGYDRVPT (76 aa). Aspartate 453, aspartate 459, glutamate 462, and glutamate 463 together coordinate Mg(2+). The FDX-ACB domain maps to 697–790; sequence SRYPSMRRDL…IEREHRARIR (94 aa).

This sequence belongs to the phenylalanyl-tRNA synthetase beta subunit family. Type 1 subfamily. As to quaternary structure, tetramer of two alpha and two beta subunits. Mg(2+) is required as a cofactor.

It localises to the cytoplasm. It catalyses the reaction tRNA(Phe) + L-phenylalanine + ATP = L-phenylalanyl-tRNA(Phe) + AMP + diphosphate + H(+). This is Phenylalanine--tRNA ligase beta subunit from Xanthomonas campestris pv. campestris (strain 8004).